Here is a 290-residue protein sequence, read N- to C-terminus: Pirin (290 aa).

4 residues coordinate Fe cation: histidine 56, histidine 58, histidine 101, and glutamate 103.

This sequence belongs to the pirin family. May interact with NF1/CTF1. Interacts with BCL3. Identified in a complex comprised of PIR, BLC3, NFKB1 and target DNA. Fe cation serves as cofactor. In terms of tissue distribution, weakly expressed in bone marrow.

It localises to the nucleus. Its subcellular location is the cytoplasm. It catalyses the reaction quercetin + O2 = 2-(3,4-dihydroxybenzoyloxy)-4,6-dihydroxybenzoate + CO. It participates in flavonoid metabolism; quercetin degradation. Transcriptional coregulator of NF-kappa-B which facilitates binding of NF-kappa-B proteins to target kappa-B genes in a redox-state-dependent manner. May be required for efficient terminal myeloid maturation of hematopoietic cells. Has quercetin 2,3-dioxygenase activity (in vitro). In Mus musculus (Mouse), this protein is Pirin (Pir).